The following is a 278-amino-acid chain: Sulfur carrier protein FdhD (278 aa).

Cysteine 121 functions as the Cysteine persulfide intermediate in the catalytic mechanism. Residue 260-265 (FCKPGR) participates in Mo-bis(molybdopterin guanine dinucleotide) binding.

The protein belongs to the FdhD family.

The protein localises to the cytoplasm. Functionally, required for formate dehydrogenase (FDH) activity. Acts as a sulfur carrier protein that transfers sulfur from IscS to the molybdenum cofactor prior to its insertion into FDH. The sequence is that of Sulfur carrier protein FdhD from Salmonella choleraesuis (strain SC-B67).